Consider the following 132-residue polypeptide: MVMTDPIADLLTRVRNANAVRHEVVEVPSSNVKKEIANILLQEGYIKEINEYNDGVVPMLRLSLKYGANKERVITGIKRISKPGLRVYCKKDEVPKVLNGLGIAVVSTSNGIMVDREARKNGLGGEVICYVW.

The protein belongs to the universal ribosomal protein uS8 family. Part of the 30S ribosomal subunit. Contacts proteins S5 and S12.

Functionally, one of the primary rRNA binding proteins, it binds directly to 16S rRNA central domain where it helps coordinate assembly of the platform of the 30S subunit. The sequence is that of Small ribosomal subunit protein uS8 from Clostridium beijerinckii (strain ATCC 51743 / NCIMB 8052) (Clostridium acetobutylicum).